A 389-amino-acid chain; its full sequence is Apoptosis inhibitor U19 (389 aa).

Belongs to the beta-herpesvirinae UL38 protein family. Interacts with host MDM2; this interaction leads to the stabilization of host TP53.

It is found in the host cytoplasm. The protein resides in the host nucleus. Its function is as follows. Plays a role in the inhibition of host apoptosis to facilitate efficient viral replication. Promotes stabilization and inactivation of host TP53 through interaction with host MDM2. In Human herpesvirus 6A (strain Uganda-1102) (HHV-6 variant A), this protein is Apoptosis inhibitor U19 (U19).